A 443-amino-acid chain; its full sequence is MYQRSLFRGVAQGLKRSSVRFQSTSSGSSNGNFFLRHWKLLSVIGSFTAGVAIYDMSDVRSFIHGRIEMPLFHAFTTPEFSHRVAILAASWGITPKDRVADDPSLAVEVWGKKFCNPIGLAAGFDKQADAISGLLNFGFSYLEIGSVTPKPQPGNPKPRYFRLKPDLSVINRYGFNSIGHDAILAKIQKRVRKYIAKTSPQLLKQFDANPASCTDPAVLGVPRSLIPNKFLGINLGKNKNGNEIEDYVEGVRTFGNFADILVINVSSPNTPGLRNLQKKSALSTLLTAVVSERNKLNSPHPPVLVKIAPDLNEEELTDIADVLKKCKIDGVIVGNTTVQRPKTLKSTSHVEETGGLSGPPLKPIALNTLRTLRKHLSSDIPIIGCGGISSGKDAIEYARAGATMVQVYTALGYDGPVIAHKIKQEILAELKGKRWVDIIGKEE.

A mitochondrion-targeting transit peptide spans 1–21 (MYQRSLFRGVAQGLKRSSVRF). The helical transmembrane segment at 38 to 54 (WKLLSVIGSFTAGVAIY) threads the bilayer. Residues 122 to 126 (AGFDK) and S146 contribute to the FMN site. K126 contacts substrate. S168 carries the post-translational modification Phosphoserine. 171-175 (NRYGF) contributes to the substrate binding site. FMN contacts are provided by N234 and N264. Position 264-269 (264-269 (NVSSPN)) interacts with substrate. The Nucleophile role is filled by S267. K306 lines the FMN pocket. 335-336 (NT) provides a ligand contact to substrate. Residues G358, G387, and 408 to 409 (YT) each bind FMN.

This sequence belongs to the dihydroorotate dehydrogenase family. Type 2 subfamily. FMN is required as a cofactor.

It localises to the mitochondrion inner membrane. It carries out the reaction (S)-dihydroorotate + a quinone = orotate + a quinol. The protein operates within pyrimidine metabolism; UMP biosynthesis via de novo pathway; orotate from (S)-dihydroorotate (quinone route): step 1/1. Functionally, in the de novo pyrimidine biosynthesis pathway, catalyzes the stereospecific oxidation of (S)-dihydroorotate to orotate with reduction of flavin and the transfer of electrons to ubiquinone, which is part of the respiratory chain. Does not use fumarate and NAD as electron acceptors. In Schizosaccharomyces pombe (strain 972 / ATCC 24843) (Fission yeast), this protein is Dihydroorotate dehydrogenase (quinone), mitochondrial (ura3).